The chain runs to 483 residues: FAD-linked oxidoreductase easE (483 aa).

Positions 10–193 constitute an FAD-binding PCMH-type domain; it reads QGRLPLYSAV…TEATVRVFSD (184 aa).

The protein belongs to the oxygen-dependent FAD-linked oxidoreductase family. FAD serves as cofactor.

It participates in alkaloid biosynthesis; ergot alkaloid biosynthesis. Functionally, FAD-linked oxidoreductase; part of the gene cluster that mediates the biosynthesis of fungal ergot alkaloid. DmaW catalyzes the first step of ergot alkaloid biosynthesis by condensing dimethylallyl diphosphate (DMAP) and tryptophan to form 4-dimethylallyl-L-tryptophan. The second step is catalyzed by the methyltransferase easF that methylates 4-dimethylallyl-L-tryptophan in the presence of S-adenosyl-L-methionine, resulting in the formation of 4-dimethylallyl-L-abrine. The catalase easC and the FAD-dependent oxidoreductase easE then transform 4-dimethylallyl-L-abrine to chanoclavine-I which is further oxidized by easD in the presence of NAD(+), resulting in the formation of chanoclavine-I aldehyde. Agroclavine dehydrogenase easG then mediates the conversion of chanoclavine-I aldehyde to agroclavine via a non-enzymatic adduct reaction: the substrate is an iminium intermediate that is formed spontaneously from chanoclavine-I aldehyde in the presence of glutathione. The presence of easA is not required to complete this reaction. Further conversion of agroclavine to paspalic acid is a two-step process involving oxidation of agroclavine to elymoclavine and of elymoclavine to paspalic acid, the second step being performed by the elymoclavine oxidase cloA. Paspalic acid is then further converted to D-lysergic acid. Ergopeptines are assembled from D-lysergic acid and three different amino acids by the D-lysergyl-peptide-synthetases composed each of a monomudular and a trimodular nonribosomal peptide synthetase subunit. LpsB and lpsC encode the monomodular subunits responsible for D-lysergic acid activation and incorporation into the ergopeptine backbone. LpsA1 and A2 subunits encode the trimodular nonribosomal peptide synthetase assembling the tripeptide portion of ergopeptines. LpsA1 is responsible for formation of the major ergopeptine, ergotamine, and lpsA2 for alpha-ergocryptine, the minor ergopeptine of the total alkaloid mixture elaborated by C.purpurea. D-lysergyl-tripeptides are assembled by the nonribosomal peptide synthetases and released as N-(D-lysergyl-aminoacyl)-lactams. Cyclolization of the D-lysergyl-tripeptides is performed by the Fe(2+)/2-ketoglutarate-dependent dioxygenase easH which introduces a hydroxyl group into N-(D-lysergyl-aminoacyl)-lactam at alpha-C of the aminoacyl residue followed by spontaneous condensation with the terminal lactam carbonyl group. This Claviceps purpurea (Ergot fungus) protein is FAD-linked oxidoreductase easE.